Consider the following 496-residue polypeptide: MATSDSNMLLNYVPVYVMLPLGVVNVDNVFEDPDGLKEQLLQLRAAGVDGVMVDVWWGIIELKGPKQYDWRAYRSLFQLVQECGLTLQAIMSFHQCGGNVGDIVNIPIPQWVLDIGESNHDIFYTNRSGTRNKEYLTVGVDNEPIFHGRTAIEIYSDYMKSFRENMSDFLESGLIIDIEVGLGPAGELRYPSYPQSQGWEFPRIGEFQCYDKYLKADFKAAVARAGHPEWELPDDAGKYNDVPESTGFFKSNGTYVTEKGKFFLTWYSNKLLNHGDQILDEANKAFLGCKVKLAIKVSGIHWWYKVENHAAELTAGYYNLNDRDGYRPIARMLSRHHAILNFTCLEMRDSEQPSDAKSGPQELVQQVLSGGWREDIRVAGENALPRYDATAYNQIILNAKPQGVNNNGPPKLSMFGVTYLRLSDDLLQKSNFNIFKKFVLKMHADQDYCANPQKYNHAITPLKPSAPKIPIEVLLEATKPTLPFPWLPETDMKVDG.

Ala2 is modified (N-acetylalanine). Substrate contacts are provided by Asp54, His94, and Asp102. The active-site Proton donor is Glu187. Residues Lys296, His301, and Thr343 each contribute to the substrate site. Catalysis depends on Glu381, which acts as the Proton acceptor. Substrate-binding positions include 382–383 and Arg421; that span reads NA.

This sequence belongs to the glycosyl hydrolase 14 family. As to quaternary structure, monomer.

It catalyses the reaction Hydrolysis of (1-&gt;4)-alpha-D-glucosidic linkages in polysaccharides so as to remove successive maltose units from the non-reducing ends of the chains.. In Glycine max (Soybean), this protein is Beta-amylase (BMY1).